A 149-amino-acid chain; its full sequence is uncharacterized protein (149 aa).

Residues 130–144 (ESNVTKENIEIKEEK) show a composition bias toward basic and acidic residues. Residues 130–149 (ESNVTKENIEIKEEKEENSE) form a disordered region.

This is an uncharacterized protein from Methanocaldococcus jannaschii (strain ATCC 43067 / DSM 2661 / JAL-1 / JCM 10045 / NBRC 100440) (Methanococcus jannaschii).